Here is a 132-residue protein sequence, read N- to C-terminus: Small ribosomal subunit protein uS8c (132 aa).

This sequence belongs to the universal ribosomal protein uS8 family. In terms of assembly, part of the 30S ribosomal subunit.

The protein resides in the plastid. Its subcellular location is the chloroplast. Functionally, one of the primary rRNA binding proteins, it binds directly to 16S rRNA central domain where it helps coordinate assembly of the platform of the 30S subunit. The polypeptide is Small ribosomal subunit protein uS8c (rps8) (Phaeodactylum tricornutum (strain CCAP 1055/1)).